The chain runs to 429 residues: MSRADDDAVGVPPTCGGRSDEEERRIVPGPNPQDGAKDGAKATAVPREPDEAALAAMSNQELLALGGKLDGVRIAYKEPRWPVEGTKAEKRAERSVAVWLLLGGVFGLALLLIFLFWPWEFKAADGESDFIYSLTTPLYGLTFGLSILSIAIGAVLYQKRFIPEEISIQERHDGASREIDRKTVVANLTDAFEGSTIRRRKLIGLSFGVGMGAFGLGTLVAFAGGLIKNPWKPVVPTAEGKKAVLWTSGWTPRYQGETIYLARATGTEDGPPFIKMRPEDIDAGGMETVFPWRESDGDGTTVESHHKLQEIAMGIRNPVMLIRIKPSDLGRVVKRKGQESFNFGEFFAFTKVCSHLGCPSSLYEQQSYRILCPCHQSQFDALHFAKPIFGPAARALAQLPITIDTDGYLVANGDFVEPVGPAFWERTTT.

Positions 1–45 (MSRADDDAVGVPPTCGGRSDEEERRIVPGPNPQDGAKDGAKATAV) are disordered. A run of 3 helical transmembrane segments spans residues 96–116 (VAVWLLLGGVFGLALLLIFLF), 137–157 (PLYGLTFGLSILSIAIGAVLY), and 207–227 (FGVGMGAFGLGTLVAFAGGLI). The 95-residue stretch at 316–410 (RNPVMLIRIK…ITIDTDGYLV (95 aa)) folds into the Rieske domain. [2Fe-2S] cluster-binding residues include Cys353, His355, Cys372, and His375. Cys358 and Cys374 are joined by a disulfide.

This sequence belongs to the Rieske iron-sulfur protein family. The cytochrome bc1 complex is composed of a cytochrome b (QcrB), the Rieske iron-sulfur protein (QcrA) and a diheme cytochrome c (QcrC) subunit. It depends on [2Fe-2S] cluster as a cofactor.

Its subcellular location is the cell membrane. In terms of biological role, iron-sulfur subunit of the cytochrome bc1 complex, an essential component of the respiratory electron transport chain required for ATP synthesis. The bc1 complex catalyzes the oxidation of menaquinol and the reduction of cytochrome c in the respiratory chain. The bc1 complex operates through a Q-cycle mechanism that couples electron transfer to generation of the proton gradient that drives ATP synthesis. The protein is Cytochrome bc1 complex Rieske iron-sulfur subunit (qcrA) of Mycobacterium bovis (strain ATCC BAA-935 / AF2122/97).